The primary structure comprises 271 residues: p-hydroxybenzoate hydroxylase transcriptional activator (271 aa).

Positions 23-83 (IAGLAKGLAL…TDEHYFWLTH (61 aa)) constitute an HTH iclR-type domain. The H-T-H motif DNA-binding region spans 45-64 (VTQVAERTGISRTAARRYLK). In terms of domain architecture, IclR-ED spans 98–271 (LPKVAQSFLN…NTANELRNLV (174 aa)).

Functionally, positive regulator of the pobA gene for p-hydroxybenzoate hydroxylase. The protein is p-hydroxybenzoate hydroxylase transcriptional activator (pobR) of Acinetobacter baylyi (strain ATCC 33305 / BD413 / ADP1).